A 348-amino-acid polypeptide reads, in one-letter code: Ferredoxin--NADP reductase (348 aa).

Residues Thr25, Glu44, Gln52, Tyr57, Val97, Phe132, Asp298, and Ser339 each contribute to the FAD site.

The protein belongs to the ferredoxin--NADP reductase type 2 family. As to quaternary structure, homodimer. It depends on FAD as a cofactor.

It catalyses the reaction 2 reduced [2Fe-2S]-[ferredoxin] + NADP(+) + H(+) = 2 oxidized [2Fe-2S]-[ferredoxin] + NADPH. In Chlorobium phaeobacteroides (strain BS1), this protein is Ferredoxin--NADP reductase.